The chain runs to 284 residues: Diaminopimelate epimerase (284 aa).

2 residues coordinate substrate: Asn-13 and Asn-66. Cys-75 functions as the Proton donor in the catalytic mechanism. Residues 76-77, Asn-166, Asn-199, and 217-218 each bind substrate; these read GN and ER. Cys-226 functions as the Proton acceptor in the catalytic mechanism. Substrate is bound at residue 227–228; the sequence is GT.

Belongs to the diaminopimelate epimerase family. Homodimer.

It localises to the cytoplasm. The enzyme catalyses (2S,6S)-2,6-diaminopimelate = meso-2,6-diaminopimelate. The protein operates within amino-acid biosynthesis; L-lysine biosynthesis via DAP pathway; DL-2,6-diaminopimelate from LL-2,6-diaminopimelate: step 1/1. In terms of biological role, catalyzes the stereoinversion of LL-2,6-diaminopimelate (L,L-DAP) to meso-diaminopimelate (meso-DAP), a precursor of L-lysine and an essential component of the bacterial peptidoglycan. The sequence is that of Diaminopimelate epimerase from Halothermothrix orenii (strain H 168 / OCM 544 / DSM 9562).